A 406-amino-acid polypeptide reads, in one-letter code: Inner kinetochore subunit OKP1 (406 aa).

Disordered regions lie at residues Met1–Ser37 and Thr59–Glu122. Polar residues predominate over residues Phe8–Gln21. Over residues Ser26–Ser37 the composition is skewed to low complexity. Positions Asn69–Ile78 are enriched in acidic residues. Ser70 carries the post-translational modification Phosphoserine. Composition is skewed to basic and acidic residues over residues Glu79–Tyr89 and Leu97–Thr106. Over residues Gly107 to Glu122 the composition is skewed to polar residues. A coiled-coil region spans residues Ser239–Lys285. Residues Met317–Ile340 form a CTF19-MCM21 binding motif region. The interaction with NKP1-NKP2 stretch occupies residues Val353–Lys400. The tract at residues Ser379–His406 is disordered. The segment covering Asp380–His406 has biased composition (basic and acidic residues).

The protein belongs to the CENP-Q/OKP1 family. In terms of assembly, component of the heterotetrameric kinetochore subcomplex COMA, which consists of AME1, CTF19, MCM21 and OKP1. The COMA subcomplex is part of a larger constitutive centromere-associated network (CCAN) (also known as central kinetochore CTF19 complex in yeast), which is composed of at least AME1, CHL4, CNN1, CTF3, CTF19, IML3, MCM16, MCM21, MCM22, MHF1, MHF2, MIF2, NKP1, NKP2, OKP1 and WIP1. COMA binds the centromeric nucleosome-binding protein MIF2, and to the outer kinetochore MIND subcomplex. OKP1 interacts directly with AME1, with an NKP1-NKP2 dimer, and with CTF19-MCM21.

Its subcellular location is the nucleus. It localises to the chromosome. The protein resides in the centromere. It is found in the kinetochore. Its function is as follows. Component of the kinetochore, a multiprotein complex that assembles on centromeric DNA and attaches chromosomes to spindle microtubules, mediating chromosome segregation and sister chromatid segregation during meiosis and mitosis. Component of the inner kinetochore COMA complex, which connects centromere-associated proteins and the outer kinetochore. COMA interacts with other inner kinetochore proteins to form the inner kinetochore constitutive centromere-associated network (CCAN), which serves as a structural platform for outer kinetochore assembly. The polypeptide is Inner kinetochore subunit OKP1 (Saccharomyces cerevisiae (strain ATCC 204508 / S288c) (Baker's yeast)).